A 381-amino-acid polypeptide reads, in one-letter code: uncharacterized protein (381 aa).

2 helical membrane passes run 22–42 (GVLLTLAAVAVVASIGTYLTA) and 246–266 (LIPENVHWTIWQLWLVVLLVA).

It is found in the cell membrane. This is an uncharacterized protein from Mycobacterium tuberculosis (strain ATCC 25618 / H37Rv).